A 578-amino-acid chain; its full sequence is Transcriptional regulator SKO1 (578 aa).

Residues asparagine 39–threonine 50 are compositionally biased toward polar residues. Disordered regions lie at residues asparagine 39 to proline 169, methionine 176 to leucine 195, leucine 287 to proline 311, and glutamate 342 to phenylalanine 489. Residues serine 51–asparagine 62 show a composition bias toward low complexity. 2 stretches are compositionally biased toward polar residues: residues asparagine 70–valine 80 and glycine 107–serine 132. Low complexity predominate over residues proline 154–proline 169. Polar residues predominate over residues leucine 184–serine 193. 2 stretches are compositionally biased toward low complexity: residues leucine 287–leucine 296 and aspartate 356–alanine 370. A compositionally biased stretch (basic residues) spans lysine 384–glycine 402. Residues lysine 415–leucine 443 show a composition bias toward basic and acidic residues. Positions asparagine 445 to lysine 471 are enriched in low complexity. The bZIP domain maps to aspartate 483–glutamine 546. The interval lysine 485–lysine 505 is basic motif. Residues isoleucine 508–leucine 515 form a leucine-zipper region.

It belongs to the bZIP family. In terms of processing, undergoes HOG1-dependent phosphorylation after osmotic stress.

The protein localises to the nucleus. In terms of biological role, transcription repressor involved in cell wall damage response. Regulates 79 caspofungin-responsive genes, including several cell wall biogenesis genes such as CRH11, MNN2, and SKN1. Also controls the expression of pathogenesis and hyphal related genes and represses the yeast-to-hypha transition. Mediates the response to oxidative stress. In Candida albicans (strain SC5314 / ATCC MYA-2876) (Yeast), this protein is Transcriptional regulator SKO1 (SKO1).